The sequence spans 325 residues: Elongation factor P--(R)-beta-lysine ligase (325 aa).

Residue 76–78 (SPE) coordinates substrate. ATP-binding positions include 100–102 (RNE) and Asn-109. Tyr-118 is a substrate binding site. Residue 244–245 (EL) participates in ATP binding. A substrate-binding site is contributed by Glu-251. Gly-300 provides a ligand contact to ATP.

The protein belongs to the class-II aminoacyl-tRNA synthetase family. EpmA subfamily. As to quaternary structure, homodimer.

The enzyme catalyses D-beta-lysine + L-lysyl-[protein] + ATP = N(6)-((3R)-3,6-diaminohexanoyl)-L-lysyl-[protein] + AMP + diphosphate + H(+). Its function is as follows. With EpmB is involved in the beta-lysylation step of the post-translational modification of translation elongation factor P (EF-P). Catalyzes the ATP-dependent activation of (R)-beta-lysine produced by EpmB, forming a lysyl-adenylate, from which the beta-lysyl moiety is then transferred to the epsilon-amino group of a conserved specific lysine residue in EF-P. The sequence is that of Elongation factor P--(R)-beta-lysine ligase from Yersinia pseudotuberculosis serotype O:1b (strain IP 31758).